The following is a 316-amino-acid chain: ATP synthase gamma chain (316 aa).

Belongs to the ATPase gamma chain family. As to quaternary structure, F-type ATPases have 2 components, CF(1) - the catalytic core - and CF(0) - the membrane proton channel. CF(1) has five subunits: alpha(3), beta(3), gamma(1), delta(1), epsilon(1). CF(0) has three main subunits: a, b and c.

It localises to the cellular thylakoid membrane. Its function is as follows. Produces ATP from ADP in the presence of a proton gradient across the membrane. The gamma chain is believed to be important in regulating ATPase activity and the flow of protons through the CF(0) complex. The sequence is that of ATP synthase gamma chain from Prochlorococcus marinus (strain AS9601).